Here is a 344-residue protein sequence, read N- to C-terminus: Ferrochelatase (344 aa).

Fe cation is bound by residues histidine 214 and glutamate 295.

This sequence belongs to the ferrochelatase family.

It is found in the cytoplasm. The catalysed reaction is heme b + 2 H(+) = protoporphyrin IX + Fe(2+). It participates in porphyrin-containing compound metabolism; protoheme biosynthesis; protoheme from protoporphyrin-IX: step 1/1. Its function is as follows. Catalyzes the ferrous insertion into protoporphyrin IX. This Rhizobium etli (strain ATCC 51251 / DSM 11541 / JCM 21823 / NBRC 15573 / CFN 42) protein is Ferrochelatase.